The following is a 142-amino-acid chain: Deoxyuridine 5'-triphosphate nucleotidohydrolase (142 aa).

Substrate contacts are provided by residues 62 to 64 (RSG), N75, and 79 to 81 (TID).

It belongs to the dUTPase family. The cofactor is Mg(2+).

The catalysed reaction is dUTP + H2O = dUMP + diphosphate + H(+). It participates in pyrimidine metabolism; dUMP biosynthesis; dUMP from dCTP (dUTP route): step 2/2. In terms of biological role, this enzyme is involved in nucleotide metabolism: it produces dUMP, the immediate precursor of thymidine nucleotides and it decreases the intracellular concentration of dUTP so that uracil cannot be incorporated into DNA. This Crocosphaera subtropica (strain ATCC 51142 / BH68) (Cyanothece sp. (strain ATCC 51142)) protein is Deoxyuridine 5'-triphosphate nucleotidohydrolase.